The primary structure comprises 275 residues: Large ribosomal subunit protein uL2 (275 aa).

Residues 223 to 275 (VAMNPIDHPHGGGEGRTSGGRHPVSPWGVPTKGYKTRSNKRTDKYIVRRRNKK) form a disordered region.

This sequence belongs to the universal ribosomal protein uL2 family. In terms of assembly, part of the 50S ribosomal subunit. Forms a bridge to the 30S subunit in the 70S ribosome.

One of the primary rRNA binding proteins. Required for association of the 30S and 50S subunits to form the 70S ribosome, for tRNA binding and peptide bond formation. It has been suggested to have peptidyltransferase activity; this is somewhat controversial. Makes several contacts with the 16S rRNA in the 70S ribosome. The chain is Large ribosomal subunit protein uL2 from Shewanella woodyi (strain ATCC 51908 / MS32).